The primary structure comprises 472 residues: N(6)-adenine-specific methyltransferase METTL4 (472 aa).

The protein belongs to the MT-A70-like family.

Its subcellular location is the nucleus. It is found in the cytoplasm. It localises to the cytosol. The protein resides in the mitochondrion matrix. The catalysed reaction is a 2'-O-methyladenosine in U2 snRNA + S-adenosyl-L-methionine = an N(6)-methyl-2'-O-methyladenosine in U2 snRNA + S-adenosyl-L-homocysteine + H(+). It carries out the reaction a 2'-deoxyadenosine in DNA + S-adenosyl-L-methionine = an N(6)-methyl-2'-deoxyadenosine in DNA + S-adenosyl-L-homocysteine + H(+). Its function is as follows. N(6)-adenine-specific methyltransferase that can methylate both RNAs and DNA. Acts as a N(6)-adenine-specific RNA methyltransferase by catalyzing formation of N6,2'-O-dimethyladenosine (m6A(m)) on internal positions of U2 small nuclear RNA (snRNA): methylates the 6th position of adenine residues with a pre-deposited 2'-O-methylation. Internal m6A(m) methylation of snRNAs regulates RNA splicing. Also able to act as a N(6)-adenine-specific DNA methyltransferase by mediating methylation of DNA on the 6th position of adenine (N(6)-methyladenosine). The existence of N(6)-methyladenosine (m6A) on DNA is however unclear in mammals, and additional evidences are required to confirm the role of the N(6)-adenine-specific DNA methyltransferase activity of METTL4 in vivo. Acts as a regulator of mitochondrial transcript levels and mitochondrial DNA (mtDNA) copy number by mediating mtDNA N(6)-methylation: m6A on mtDNA reduces transcription by repressing TFAM DNA-binding and bending. N(6)-methyladenosine deposition by METTL4 regulates Polycomb silencing by triggering ubiquitination and degradation of sensor proteins ASXL1 and MPND, leading to inactivation of the PR-DUB complex and subsequent preservation of Polycomb silencing. The sequence is that of N(6)-adenine-specific methyltransferase METTL4 from Homo sapiens (Human).